The chain runs to 502 residues: Glycerol kinase (502 aa).

Threonine 14 is an ADP binding site. Residues threonine 14, threonine 15, and serine 16 each contribute to the ATP site. Residue threonine 14 coordinates sn-glycerol 3-phosphate. Position 18 (arginine 18) interacts with ADP. Sn-glycerol 3-phosphate-binding residues include arginine 84, glutamate 85, tyrosine 136, and aspartate 246. Glycerol-binding residues include arginine 84, glutamate 85, tyrosine 136, aspartate 246, and glutamine 247. The ADP site is built by threonine 268 and glycine 311. ATP contacts are provided by threonine 268, glycine 311, glutamine 315, and glycine 412. ADP is bound by residues glycine 412 and asparagine 416.

The protein belongs to the FGGY kinase family. As to quaternary structure, homotetramer and homodimer (in equilibrium). Heterodimer with EIIA-Glc. Binds 1 zinc ion per glycerol kinase EIIA-Glc dimer. The zinc ion is important for dimerization.

It carries out the reaction glycerol + ATP = sn-glycerol 3-phosphate + ADP + H(+). It participates in polyol metabolism; glycerol degradation via glycerol kinase pathway; sn-glycerol 3-phosphate from glycerol: step 1/1. Its activity is regulated as follows. Activity of this regulatory enzyme is affected by several metabolites. Allosterically and non-competitively inhibited by fructose 1,6-bisphosphate (FBP) and unphosphorylated phosphocarrier protein EIIA-Glc (III-Glc), an integral component of the bacterial phosphotransferase (PTS) system. Functionally, key enzyme in the regulation of glycerol uptake and metabolism. Catalyzes the phosphorylation of glycerol to yield sn-glycerol 3-phosphate. The protein is Glycerol kinase of Escherichia fergusonii (strain ATCC 35469 / DSM 13698 / CCUG 18766 / IAM 14443 / JCM 21226 / LMG 7866 / NBRC 102419 / NCTC 12128 / CDC 0568-73).